A 382-amino-acid polypeptide reads, in one-letter code: Glutamyl-tRNA reductase (382 aa).

Substrate-binding positions include 38 to 41 (TCNR), Ser-85, 90 to 92 (ENQ), and Gln-96. Cys-39 (nucleophile) is an active-site residue. 164–169 (GAGEIG) serves as a coordination point for NADP(+).

This sequence belongs to the glutamyl-tRNA reductase family. In terms of assembly, homodimer.

It catalyses the reaction (S)-4-amino-5-oxopentanoate + tRNA(Glu) + NADP(+) = L-glutamyl-tRNA(Glu) + NADPH + H(+). The protein operates within porphyrin-containing compound metabolism; protoporphyrin-IX biosynthesis; 5-aminolevulinate from L-glutamyl-tRNA(Glu): step 1/2. Functionally, catalyzes the NADPH-dependent reduction of glutamyl-tRNA(Glu) to glutamate 1-semialdehyde (GSA). The protein is Glutamyl-tRNA reductase of Methanococcus maripaludis (strain C7 / ATCC BAA-1331).